The sequence spans 314 residues: tRNA pseudouridine synthase B (314 aa).

H43 is a substrate binding site. Residue D48 is the Nucleophile of the active site. Substrate-binding residues include Y76, Y179, and L200.

This sequence belongs to the pseudouridine synthase TruB family. Type 1 subfamily.

It catalyses the reaction uridine(55) in tRNA = pseudouridine(55) in tRNA. Functionally, responsible for synthesis of pseudouridine from uracil-55 in the psi GC loop of transfer RNAs. The protein is tRNA pseudouridine synthase B of Salmonella choleraesuis (strain SC-B67).